The primary structure comprises 449 residues: N-succinylarginine dihydrolase (449 aa).

Residues 19–28, Asn110, and 137–138 each bind substrate; these read GGLSYGNVAS and HR. The interval 23-43 is disordered; that stretch reads YGNVASQSNSQQASNPREAAR. The span at 27-37 shows a compositional bias: low complexity; the sequence is ASQSNSQQASN. Glu174 is a catalytic residue. Residue Arg214 coordinates substrate. His250 is an active-site residue. 2 residues coordinate substrate: Asp252 and Asn365. The Nucleophile role is filled by Cys371.

The protein belongs to the succinylarginine dihydrolase family. As to quaternary structure, homodimer.

It catalyses the reaction N(2)-succinyl-L-arginine + 2 H2O + 2 H(+) = N(2)-succinyl-L-ornithine + 2 NH4(+) + CO2. It functions in the pathway amino-acid degradation; L-arginine degradation via AST pathway; L-glutamate and succinate from L-arginine: step 2/5. In terms of biological role, catalyzes the hydrolysis of N(2)-succinylarginine into N(2)-succinylornithine, ammonia and CO(2). This Pseudomonas putida (strain ATCC 47054 / DSM 6125 / CFBP 8728 / NCIMB 11950 / KT2440) protein is N-succinylarginine dihydrolase.